Here is a 344-residue protein sequence, read N- to C-terminus: uncharacterized protein (344 aa).

A disordered region spans residues 190–232 (SGKRVRSAKKSGADAARASEGATCDRASSESVSPTARPPAQAS).

This is an uncharacterized protein from Treponema pallidum (strain Nichols).